The sequence spans 221 residues: UPF0758 protein KPN78578_39390 (221 aa).

Positions Ala-99–Ile-221 constitute an MPN domain. The Zn(2+) site is built by His-170, His-172, and Asp-183. Residues His-170–Asp-183 carry the JAMM motif motif.

The protein belongs to the UPF0758 family. YicR subfamily.

This chain is UPF0758 protein KPN78578_39390, found in Klebsiella pneumoniae subsp. pneumoniae (strain ATCC 700721 / MGH 78578).